Reading from the N-terminus, the 205-residue chain is Golgi to ER traffic protein 1 (205 aa).

The Lumenal portion of the chain corresponds to 1–3; sequence MDY. A helical membrane pass occupies residues 4–24; that stretch reads WILLVLAFLVADKSWHLTGLL. The Cytoplasmic portion of the chain corresponds to 25 to 96; it reads ATKLTSPERL…ATKARLAKLK (72 aa). Residues 32–96 adopt a coiled-coil conformation; the sequence is ERLQQLIRER…ATKARLAKLK (65 aa). Residues 97–117 traverse the membrane as a helical segment; sequence LLVVTVPFTALKFYKGKLPVY. Residues 118–156 lie on the Lumenal side of the membrane; it reads ALPKGMFPRFIEGTLEHGWLYMALAPLNMKQFSEGASVA. A helical membrane pass occupies residues 157–173; that stretch reads VSLGIWLFALLRVLGAI. The Cytoplasmic segment spans residues 174–205; sequence EFVLETLREQNPQVATETAKVHARTAQAASAN.

The protein belongs to the WRB/GET1 family. Component of the Golgi to ER traffic (GET) complex, which is composed of GET1, GET2 and GET3. Within the complex, GET1 and GET2 form a heterotetramer which is stabilized by phosphatidylinositol binding and which binds to the GET3 homodimer.

It localises to the endoplasmic reticulum membrane. Its subcellular location is the golgi apparatus membrane. Functionally, required for the post-translational delivery of tail-anchored (TA) proteins to the endoplasmic reticulum. Together with GET2, acts as a membrane receptor for soluble GET3, which recognizes and selectively binds the transmembrane domain of TA proteins in the cytosol. The GET complex cooperates with the HDEL receptor ERD2 to mediate the ATP-dependent retrieval of resident ER proteins that contain a C-terminal H-D-E-L retention signal from the Golgi to the ER. This is Golgi to ER traffic protein 1 from Eremothecium gossypii (strain ATCC 10895 / CBS 109.51 / FGSC 9923 / NRRL Y-1056) (Yeast).